The chain runs to 201 residues: Recombination protein RecR (201 aa).

The C4-type zinc finger occupies 60–75; that stretch reads CSVCGNIDTTDPCSIC. A Toprim domain is found at 83–178; the sequence is GTIIVVEDIS…KITRLAHGVP (96 aa).

Belongs to the RecR family.

Functionally, may play a role in DNA repair. It seems to be involved in an RecBC-independent recombinational process of DNA repair. It may act with RecF and RecO. The protein is Recombination protein RecR of Bartonella bacilliformis (strain ATCC 35685 / KC583 / Herrer 020/F12,63).